Here is a 188-residue protein sequence, read N- to C-terminus: Elongation factor P (188 aa).

It belongs to the elongation factor P family.

Its subcellular location is the cytoplasm. It functions in the pathway protein biosynthesis; polypeptide chain elongation. Functionally, involved in peptide bond synthesis. Stimulates efficient translation and peptide-bond synthesis on native or reconstituted 70S ribosomes in vitro. Probably functions indirectly by altering the affinity of the ribosome for aminoacyl-tRNA, thus increasing their reactivity as acceptors for peptidyl transferase. This chain is Elongation factor P, found in Chlorobaculum tepidum (strain ATCC 49652 / DSM 12025 / NBRC 103806 / TLS) (Chlorobium tepidum).